Reading from the N-terminus, the 98-residue chain is Co-chaperonin GroES (98 aa).

This sequence belongs to the GroES chaperonin family. Heptamer of 7 subunits arranged in a ring. Interacts with the chaperonin GroEL.

It is found in the cytoplasm. Its function is as follows. Together with the chaperonin GroEL, plays an essential role in assisting protein folding. The GroEL-GroES system forms a nano-cage that allows encapsulation of the non-native substrate proteins and provides a physical environment optimized to promote and accelerate protein folding. GroES binds to the apical surface of the GroEL ring, thereby capping the opening of the GroEL channel. This Renibacterium salmoninarum (strain ATCC 33209 / DSM 20767 / JCM 11484 / NBRC 15589 / NCIMB 2235) protein is Co-chaperonin GroES.